The chain runs to 72 residues: Translational regulator CsrA (72 aa).

The protein belongs to the CsrA/RsmA family. Homodimer; the beta-strands of each monomer intercalate to form a hydrophobic core, while the alpha-helices form wings that extend away from the core.

The protein localises to the cytoplasm. Functionally, a translational regulator that binds mRNA to regulate translation initiation and/or mRNA stability. Usually binds in the 5'-UTR at or near the Shine-Dalgarno sequence preventing ribosome-binding, thus repressing translation. Its main target seems to be the major flagellin gene, while its function is anatagonized by FliW. The protein is Translational regulator CsrA of Agathobacter rectalis (strain ATCC 33656 / DSM 3377 / JCM 17463 / KCTC 5835 / VPI 0990) (Eubacterium rectale).